Here is a 599-residue protein sequence, read N- to C-terminus: Elongation factor 4 (599 aa).

Residues 2–184 enclose the tr-type G domain; sequence KNIRNFSIIA…RLVRDIPPPE (183 aa). GTP contacts are provided by residues 14-19 and 131-134; these read DHGKST and NKID.

Belongs to the TRAFAC class translation factor GTPase superfamily. Classic translation factor GTPase family. LepA subfamily.

The protein resides in the cell inner membrane. The catalysed reaction is GTP + H2O = GDP + phosphate + H(+). Functionally, required for accurate and efficient protein synthesis under certain stress conditions. May act as a fidelity factor of the translation reaction, by catalyzing a one-codon backward translocation of tRNAs on improperly translocated ribosomes. Back-translocation proceeds from a post-translocation (POST) complex to a pre-translocation (PRE) complex, thus giving elongation factor G a second chance to translocate the tRNAs correctly. Binds to ribosomes in a GTP-dependent manner. This Klebsiella pneumoniae subsp. pneumoniae (strain ATCC 700721 / MGH 78578) protein is Elongation factor 4.